The chain runs to 343 residues: F-box/kelch-repeat protein At3g08810 (343 aa).

Basic residues predominate over residues 1–15 (MSYPERKRKRSRWSK). Positions 1-25 (MSYPERKRKRSRWSKPHSTQNPSPS) are disordered. The F-box domain maps to 20 to 66 (QNPSPSLPDDVLLSIFARVSRLYYPTLSHVSESFRSLLASPELYKAR). 3 Kelch repeats span residues 134–181 (DIYN…VRDG), 183–224 (QGGH…LPDS), and 225–271 (YCVI…VILA).

This chain is F-box/kelch-repeat protein At3g08810, found in Arabidopsis thaliana (Mouse-ear cress).